The chain runs to 180 residues: Cytochrome b6-f complex subunit 4 (180 aa).

3 consecutive transmembrane segments (helical) span residues 36 to 56 (LSYI…GLAV), 95 to 115 (LLGV…PFLE), and 131 to 151 (TVSL…ALPI).

The protein belongs to the cytochrome b family. PetD subfamily. As to quaternary structure, the 4 large subunits of the cytochrome b6-f complex are cytochrome b6, subunit IV (17 kDa polypeptide, petD), cytochrome f and the Rieske protein, while the 4 small subunits are petG, petL, petM and petN. The complex functions as a dimer.

The protein localises to the plastid. It localises to the chloroplast thylakoid membrane. Its function is as follows. Component of the cytochrome b6-f complex, which mediates electron transfer between photosystem II (PSII) and photosystem I (PSI), cyclic electron flow around PSI, and state transitions. This is Cytochrome b6-f complex subunit 4 from Pinus thunbergii (Japanese black pine).